The following is a 494-amino-acid chain: NADH-quinone oxidoreductase subunit N 2 (494 aa).

The next 14 helical transmembrane spans lie at 14 to 34 (LPQI…GMLL), 45 to 65 (IAML…PLTA), 82 to 102 (VVQV…GSVL), 116 to 136 (IGEF…LVST), 139 to 159 (LLLI…LTAF), 174 to 194 (FLFG…LYGV), 214 to 234 (LLVA…AAPF), 262 to 282 (FFVF…NAAW), 289 to 309 (WMPI…LAAL), 317 to 337 (LLAY…IAHT), 344 to 364 (LLYY…VLAI), 388 to 408 (ACLL…GFFA), 422 to 442 (AFGL…ALFY), and 470 to 490 (ITLL…NLLM).

The protein belongs to the complex I subunit 2 family. As to quaternary structure, NDH-1 is composed of 14 different subunits. Subunits NuoA, H, J, K, L, M, N constitute the membrane sector of the complex.

The protein localises to the cell inner membrane. It catalyses the reaction a quinone + NADH + 5 H(+)(in) = a quinol + NAD(+) + 4 H(+)(out). NDH-1 shuttles electrons from NADH, via FMN and iron-sulfur (Fe-S) centers, to quinones in the respiratory chain. The immediate electron acceptor for the enzyme in this species is believed to be ubiquinone. Couples the redox reaction to proton translocation (for every two electrons transferred, four hydrogen ions are translocated across the cytoplasmic membrane), and thus conserves the redox energy in a proton gradient. The sequence is that of NADH-quinone oxidoreductase subunit N 2 from Acidobacterium capsulatum (strain ATCC 51196 / DSM 11244 / BCRC 80197 / JCM 7670 / NBRC 15755 / NCIMB 13165 / 161).